A 136-amino-acid polypeptide reads, in one-letter code: Probable endoribonuclease MazF7 (136 aa).

The interval 115–136 is disordered; it reads TGPERGEAATHSPVRWTGGRDP.

Belongs to the PemK/MazF family. In terms of assembly, forms a complex with cognate antitoxin MazE7.

Toxic component of a type II toxin-antitoxin (TA) system. Upon expression in E.coli and M.smegmatis inhibits cell growth and colony formation. Its toxic effect is neutralized by coexpression with cognate antitoxin MazE7. Probably an endoribonuclease. In Mycobacterium tuberculosis (strain ATCC 25618 / H37Rv), this protein is Probable endoribonuclease MazF7 (mazF7).